The primary structure comprises 158 residues: S-ribosylhomocysteine lyase (158 aa).

The Fe cation site is built by His-56, His-60, and Cys-125.

This sequence belongs to the LuxS family. Homodimer. Fe cation serves as cofactor.

It carries out the reaction S-(5-deoxy-D-ribos-5-yl)-L-homocysteine = (S)-4,5-dihydroxypentane-2,3-dione + L-homocysteine. Involved in the synthesis of autoinducer 2 (AI-2) which is secreted by bacteria and is used to communicate both the cell density and the metabolic potential of the environment. The regulation of gene expression in response to changes in cell density is called quorum sensing. Catalyzes the transformation of S-ribosylhomocysteine (RHC) to homocysteine (HC) and 4,5-dihydroxy-2,3-pentadione (DPD). In Leuconostoc mesenteroides subsp. mesenteroides (strain ATCC 8293 / DSM 20343 / BCRC 11652 / CCM 1803 / JCM 6124 / NCDO 523 / NBRC 100496 / NCIMB 8023 / NCTC 12954 / NRRL B-1118 / 37Y), this protein is S-ribosylhomocysteine lyase.